Reading from the N-terminus, the 648-residue chain is ABC transporter G family member 14 (648 aa).

One can recognise an ABC transporter domain in the interval 53 to 304 (LKFEEVVYKV…FSSLGFSTSL (252 aa)). 99–106 (GPSGSGKT) provides a ligand contact to ATP. Residue asparagine 346 is glycosylated (N-linked (GlcNAc...) asparagine). An ABC transmembrane type-2 domain is found at 384–590 (YQFTVLLQRG…CYKLLLGIQY (207 aa)). 7 helical membrane-spanning segments follow: residues 405-425 (LRIF…WHTP), 435-455 (LLFF…VFTF), 485-505 (LPLE…MGGL), 512-532 (FILS…LGLA), 543-562 (ATTL…GYYV), 569-591 (IVWL…IQYT), and 620-640 (LWID…MAYM).

Belongs to the ABC transporter superfamily. ABCG family. Eye pigment precursor importer (TC 3.A.1.204) subfamily. In terms of assembly, forms heterodimers with ABCG11. As to expression, accumulates primarily in the pericycle and stelar cells of roots. Expressed in leaves, stems, flowers and siliques, and, at low levels, in roots. Accumulates in the phloem.

The protein resides in the cell membrane. Positive regulator of plant growth which acts as an efflux pump involved in the major root-to-shoot (acropetal) long-distance cytokinin (CK) transport via the xylem sap. Together with ABCG9 and ABCG11, required for vascular development by regulating lipid/sterol homeostasis. Involved in CK-dependent responses to oxidative stress such as hydrogen peroxide H(2)O(2). In terms of biological role, (Microbial infection) Required for SNC1-mediated defense response against the virulent pathogen Pseudomonas syringae pv. tomato DC3000 by promoting the accumulation of trans-zeatin (tZ)-type cytokinins (CK) in the shoot. This Arabidopsis thaliana (Mouse-ear cress) protein is ABC transporter G family member 14.